The chain runs to 258 residues: 1-(5-phosphoribosyl)-5-[(5-phosphoribosylamino)methylideneamino] imidazole-4-carboxamide isomerase (258 aa).

Catalysis depends on aspartate 17, which acts as the Proton acceptor. Aspartate 136 (proton donor) is an active-site residue.

Belongs to the HisA/HisF family.

It is found in the cytoplasm. It carries out the reaction 1-(5-phospho-beta-D-ribosyl)-5-[(5-phospho-beta-D-ribosylamino)methylideneamino]imidazole-4-carboxamide = 5-[(5-phospho-1-deoxy-D-ribulos-1-ylimino)methylamino]-1-(5-phospho-beta-D-ribosyl)imidazole-4-carboxamide. It participates in amino-acid biosynthesis; L-histidine biosynthesis; L-histidine from 5-phospho-alpha-D-ribose 1-diphosphate: step 4/9. The chain is 1-(5-phosphoribosyl)-5-[(5-phosphoribosylamino)methylideneamino] imidazole-4-carboxamide isomerase from Corynebacterium jeikeium (strain K411).